We begin with the raw amino-acid sequence, 475 residues long: UDP-N-acetylmuramate--L-alanine ligase (475 aa).

118-124 (GTHGKTT) is an ATP binding site.

The protein belongs to the MurCDEF family.

Its subcellular location is the cytoplasm. It catalyses the reaction UDP-N-acetyl-alpha-D-muramate + L-alanine + ATP = UDP-N-acetyl-alpha-D-muramoyl-L-alanine + ADP + phosphate + H(+). It participates in cell wall biogenesis; peptidoglycan biosynthesis. Functionally, cell wall formation. The protein is UDP-N-acetylmuramate--L-alanine ligase of Paracoccus denitrificans (strain Pd 1222).